A 267-amino-acid polypeptide reads, in one-letter code: Undecaprenyl-diphosphatase (267 aa).

8 helical membrane passes run 1–21 (MSEL…FLPI), 39–59 (QGLA…LIYF), 87–107 (WWIL…KSLV), 113–133 (SGYV…WADA), 144–164 (TGLK…IPGT), 189–209 (FLMS…KFIL), 219–239 (LFLG…VFLI), and 244–264 (VGMM…FYIL).

It belongs to the UppP family.

The protein localises to the cell inner membrane. It catalyses the reaction di-trans,octa-cis-undecaprenyl diphosphate + H2O = di-trans,octa-cis-undecaprenyl phosphate + phosphate + H(+). Functionally, catalyzes the dephosphorylation of undecaprenyl diphosphate (UPP). Confers resistance to bacitracin. The protein is Undecaprenyl-diphosphatase of Psychromonas ingrahamii (strain DSM 17664 / CCUG 51855 / 37).